A 317-amino-acid chain; its full sequence is 2-keto-3-deoxygluconate permease 1 (317 aa).

A run of 10 helical transmembrane segments spans residues 10–30 (VPGG…TFAP), 47–67 (AAPL…VKAA), 82–102 (LLVA…EGIF), 106–126 (GVAI…ALVG), 134–154 (VGAI…IALG), 159–179 (ANIP…GMIL), 195–215 (PLLI…EMLL), 217–237 (GGLA…FFNI), 248–268 (IAGA…LAIA), and 279–299 (AAAA…TPVL).

This sequence belongs to the KdgT transporter family.

It localises to the cell inner membrane. It catalyses the reaction 2-dehydro-3-deoxy-D-gluconate(in) + H(+)(in) = 2-dehydro-3-deoxy-D-gluconate(out) + H(+)(out). Functionally, catalyzes the proton-dependent uptake of 2-keto-3-deoxygluconate (KDG) into the cell. The polypeptide is 2-keto-3-deoxygluconate permease 1 (Salmonella typhi).